A 336-amino-acid chain; its full sequence is Ferredoxin--NADP reductase 1 (336 aa).

Residues Glu-37, Lys-45, Phe-50, Val-90, Leu-125, Asp-287, and Thr-328 each contribute to the FAD site.

This sequence belongs to the ferredoxin--NADP reductase type 2 family. Homodimer. FAD is required as a cofactor.

The catalysed reaction is 2 reduced [2Fe-2S]-[ferredoxin] + NADP(+) + H(+) = 2 oxidized [2Fe-2S]-[ferredoxin] + NADPH. The sequence is that of Ferredoxin--NADP reductase 1 from Bacillus velezensis (strain DSM 23117 / BGSC 10A6 / LMG 26770 / FZB42) (Bacillus amyloliquefaciens subsp. plantarum).